Consider the following 79-residue polypeptide: Small ribosomal subunit protein bS18B (79 aa).

Belongs to the bacterial ribosomal protein bS18 family. In terms of assembly, part of the 30S ribosomal subunit. Forms a tight heterodimer with protein bS6.

Its function is as follows. Binds as a heterodimer with protein bS6 to the central domain of the 16S rRNA, where it helps stabilize the platform of the 30S subunit. The chain is Small ribosomal subunit protein bS18B from Mycolicibacterium gilvum (strain PYR-GCK) (Mycobacterium gilvum (strain PYR-GCK)).